A 313-amino-acid polypeptide reads, in one-letter code: Potassium channel subfamily K member 6 (313 aa).

Residues 1–4 lie on the Cytoplasmic side of the membrane; sequence MRRG. Residues 5 to 25 form a helical membrane-spanning segment; that stretch reads ALLAGALAAYAAYLVLGALLV. N-linked (GlcNAc...) asparagine glycosylation is found at Asn-79 and Asn-85. Residues 90–115 constitute an intramembrane region (pore-forming); it reads AWDFASALFFASTLITTVGYGYTTPL. Positions 106, 107, 108, and 109 each coordinate K(+). Residues 106–111 are selectivity filter 1; it reads TVGYGY. A helical transmembrane segment spans residues 121–141; it reads AFSIAFALLGVPTTMLLLTAS. At 142–172 the chain is on the cytoplasmic side; the sequence is AQRLSLLLTHVPLSWLSMRWGWDPRRAACWH. A helical membrane pass occupies residues 173–193; the sequence is LVALLGVVVTVCFLVPAVIFA. Residues 199–223 constitute an intramembrane region (pore-forming); sequence WSFLDAFYFCFISLSTIGLGDYVPG. K(+) contacts are provided by Thr-214, Ile-215, and Gly-216. The tract at residues 214 to 219 is selectivity filter 2; the sequence is TIGLGD. Residues 236-256 form a helical membrane-spanning segment; it reads VLVTVYLFLGLVAMVLVLQTF. At 257–313 the chain is on the cytoplasmic side; it reads RHVSDLHGLTELILLPPPCPASFNADEDDRVDILGPQPESHQQLSASSHTDYASIPR. The Lysosomal targeting signal signature appears at 282–290; that stretch reads DEDDRVDIL. The tract at residues 288-313 is disordered; sequence DILGPQPESHQQLSASSHTDYASIPR. Residues 295-307 are compositionally biased toward polar residues; sequence ESHQQLSASSHTD. The short motif at 308–312 is the Lysosomal targeting signal element; it reads YASIP.

The protein belongs to the two pore domain potassium channel (TC 1.A.1.8) family. In terms of assembly, homodimer; disulfide-linked. Post-translationally, N-glycosylation is necessary for targeting to lysosomes. Widespread expression, detected in all tissues tested except for skeletal muscle. Strongest expression in placenta, pancreas, heart, colon and spleen, lower levels detected in peripheral blood leukocytes, lung, liver, kidney and thymus. Lowest expression detected in brain.

The protein resides in the late endosome membrane. It localises to the lysosome membrane. It catalyses the reaction K(+)(in) = K(+)(out). K(+) channel that conducts outward rectifying currents at the membranes of the endolysosomal system. Active in lysosomes where it regulates lysosome numbers and size. In macrophages, enables K(+) efflux coupled to ATP-induced NLRP3 inflammasome activation upon bacterial infection. Cooperates with ATP-gated P2RX7 channels to activate NLRP3 inflammasome, with P2RX7 conducting Ca(2+) and Na(+) influx that sets the membrane potential for K(+) efflux. Functionally, does not display channel activity. The chain is Potassium channel subfamily K member 6 from Homo sapiens (Human).